The primary structure comprises 193 residues: ATP-dependent Clp protease proteolytic subunit (193 aa).

The active-site Nucleophile is Ser98. His123 is an active-site residue.

This sequence belongs to the peptidase S14 family. As to quaternary structure, fourteen ClpP subunits assemble into 2 heptameric rings which stack back to back to give a disk-like structure with a central cavity, resembling the structure of eukaryotic proteasomes.

It localises to the cytoplasm. It carries out the reaction Hydrolysis of proteins to small peptides in the presence of ATP and magnesium. alpha-casein is the usual test substrate. In the absence of ATP, only oligopeptides shorter than five residues are hydrolyzed (such as succinyl-Leu-Tyr-|-NHMec, and Leu-Tyr-Leu-|-Tyr-Trp, in which cleavage of the -Tyr-|-Leu- and -Tyr-|-Trp bonds also occurs).. Its function is as follows. Cleaves peptides in various proteins in a process that requires ATP hydrolysis. Has a chymotrypsin-like activity. Plays a major role in the degradation of misfolded proteins. The protein is ATP-dependent Clp protease proteolytic subunit of Haemophilus influenzae (strain PittEE).